The primary structure comprises 1051 residues: Putative helicase/primase complex protein (1051 aa).

It belongs to the asfivirus F1055L family.

Functionally, may be involved in DNA replication. The protein is Putative helicase/primase complex protein of Ornithodoros (relapsing fever ticks).